Here is a 67-residue protein sequence, read N- to C-terminus: Ceratotoxin-C (67 aa).

Positions Met1–Ala23 are cleaved as a signal peptide. The propeptide occupies Glu24 to Arg35.

Homomer of four to six subunits.

It is found in the secreted. Its function is as follows. Female-specific peptides with potent activity against Gram-positive and Gram-negative bacteria. They have as well hemolytic activity. This chain is Ceratotoxin-C (CTXC1), found in Ceratitis capitata (Mediterranean fruit fly).